The primary structure comprises 184 residues: Peptidyl-tRNA hydrolase (184 aa).

Residue tyrosine 14 participates in tRNA binding. The active-site Proton acceptor is histidine 19. The tRNA site is built by phenylalanine 64, asparagine 66, and asparagine 112.

This sequence belongs to the PTH family. Monomer.

Its subcellular location is the cytoplasm. It catalyses the reaction an N-acyl-L-alpha-aminoacyl-tRNA + H2O = an N-acyl-L-amino acid + a tRNA + H(+). Its function is as follows. Hydrolyzes ribosome-free peptidyl-tRNAs (with 1 or more amino acids incorporated), which drop off the ribosome during protein synthesis, or as a result of ribosome stalling. Catalyzes the release of premature peptidyl moieties from peptidyl-tRNA molecules trapped in stalled 50S ribosomal subunits, and thus maintains levels of free tRNAs and 50S ribosomes. This is Peptidyl-tRNA hydrolase from Thermoanaerobacter pseudethanolicus (strain ATCC 33223 / 39E) (Clostridium thermohydrosulfuricum).